The primary structure comprises 651 residues: Probable ATP-dependent helicase MJ0942 (651 aa).

Residues 6-255 form the Helicase ATP-binding domain; it reads YIKEKFPYPK…EIIEKYLTSR (250 aa). 41–48 is a binding site for ATP; the sequence is APTGVGKT. Positions 102, 149, and 154 each coordinate [4Fe-4S] cluster. The short motif at 195 to 198 is the DEAH box element; that stretch reads DEAH. Residues 449–638 enclose the Helicase C-terminal domain; that stretch reads NLLKILEAIN…NYEVMSLDMA (190 aa).

It belongs to the helicase family. DinG subfamily. The cofactor is [4Fe-4S] cluster.

The enzyme catalyses Couples ATP hydrolysis with the unwinding of duplex DNA at the replication fork by translocating in the 5'-3' direction. This creates two antiparallel DNA single strands (ssDNA). The leading ssDNA polymer is the template for DNA polymerase III holoenzyme which synthesizes a continuous strand.. The catalysed reaction is ATP + H2O = ADP + phosphate + H(+). In terms of biological role, might be a 5'-3' DNA helicase. The chain is Probable ATP-dependent helicase MJ0942 from Methanocaldococcus jannaschii (strain ATCC 43067 / DSM 2661 / JAL-1 / JCM 10045 / NBRC 100440) (Methanococcus jannaschii).